The following is a 243-amino-acid chain: 2,3-bisphosphoglycerate-dependent phosphoglycerate mutase (243 aa).

Substrate-binding positions include Arg8–Asn15, Thr21–Gly22, Arg60, Glu87–Tyr90, Lys98, Arg114–Arg115, and Gly183–Asn184. The active-site Tele-phosphohistidine intermediate is His9. The Proton donor/acceptor role is filled by Glu87.

The protein belongs to the phosphoglycerate mutase family. BPG-dependent PGAM subfamily.

The catalysed reaction is (2R)-2-phosphoglycerate = (2R)-3-phosphoglycerate. It participates in carbohydrate degradation; glycolysis; pyruvate from D-glyceraldehyde 3-phosphate: step 3/5. In terms of biological role, catalyzes the interconversion of 2-phosphoglycerate and 3-phosphoglycerate. The protein is 2,3-bisphosphoglycerate-dependent phosphoglycerate mutase of Clostridium acetobutylicum (strain ATCC 824 / DSM 792 / JCM 1419 / IAM 19013 / LMG 5710 / NBRC 13948 / NRRL B-527 / VKM B-1787 / 2291 / W).